Here is a 541-residue protein sequence, read N- to C-terminus: DNA polymerase epsilon subunit B (541 aa).

It belongs to the DNA polymerase epsilon subunit B family. In terms of assembly, heterotetramer. Consists of four subunits: POL2, DPB2, DPB3 and DPB4.

It localises to the nucleus. Functionally, as accessory component of the DNA polymerase epsilon (DNA polymerase II) participates in chromosomal DNA replication. The polypeptide is DNA polymerase epsilon subunit B (DPB2) (Cryptococcus neoformans var. neoformans serotype D (strain B-3501A) (Filobasidiella neoformans)).